Here is a 260-residue protein sequence, read N- to C-terminus: Dof zinc finger protein DOF1.2 (260 aa).

Residues 38 to 92 (PACPRCASSNTKFCYYNNYSLSQPRYFCKGCRRYWTKGGSLRNIPVGGGCRKRSR) form a Dof-type zinc finger. Zn(2+)-binding residues include cysteine 40, cysteine 43, cysteine 65, and cysteine 68. The tract at residues 83–124 (VGGGCRKRSRSRQNSHKRFGRNENRPDGLINQDDGFQSSPPG) is disordered. Over residues 87 to 101 (CRKRSRSRQNSHKRF) the composition is skewed to basic residues.

It localises to the nucleus. Its function is as follows. Transcription factor that binds specifically to a 5'-AA[AG]G-3' consensus core sequence. The chain is Dof zinc finger protein DOF1.2 (DOF1.2) from Arabidopsis thaliana (Mouse-ear cress).